The primary structure comprises 299 residues: MPSIDCKRLQKLAPKSPENQSKCISRLRYMVMLDQVESDEGGNSSTRPYVWAVLLNAPPRNADEYIRYVRQGPSPMAQKIQNDVSRTLVVESQFHSRVSQSSLSRLLNAYVWKRGALYVQGMNVLASPFLYACKSENQAFQFFDRLLQNECPLYVLPNIDGVHRGAKLLDKCLEVLDHRLYTYLLSKGLTAKIYALPSILTLSACTAPLSEALTIWDFLFAYGIHLNILCVIAQMFIFREQLIDHPSPMTLLRTFPPLNAKNIMKITILLISKLPPELYNLLARHAWDSEAGVLIDRLT.

One can recognise a Rab-GAP TBC domain in the interval 41-223 (GGNSSTRPYV…TIWDFLFAYG (183 aa)).

Belongs to the BUB2 family.

The protein resides in the cytoplasm. The protein localises to the cytoskeleton. It is found in the microtubule organizing center. Its subcellular location is the spindle pole body. In terms of biological role, has a dual role in the cell cycle. In mitosis, it is involved in maintenance of cdc2 kinase activity. It is subsequently required for regulation of septum formation. Could be involved in maintenance of cdc2 kinase activity by preventing, directly or indirectly, the degradation of cyclin or the dephosphorylation of 'Thr-167' of cdc2. The polypeptide is Cell division control protein 16 (cdc16) (Schizosaccharomyces pombe (strain 972 / ATCC 24843) (Fission yeast)).